The chain runs to 434 residues: Histidinol dehydrogenase (434 aa).

Residues serine 242, glutamine 264, and histidine 267 each coordinate substrate. Residues glutamine 264 and histidine 267 each coordinate Zn(2+). Residues glutamate 332 and histidine 333 each act as proton acceptor in the active site. Residues histidine 333, aspartate 366, glutamate 420, and histidine 425 each coordinate substrate. Aspartate 366 is a binding site for Zn(2+). Histidine 425 provides a ligand contact to Zn(2+).

It belongs to the histidinol dehydrogenase family. Requires Zn(2+) as cofactor.

It carries out the reaction L-histidinol + 2 NAD(+) + H2O = L-histidine + 2 NADH + 3 H(+). The protein operates within amino-acid biosynthesis; L-histidine biosynthesis; L-histidine from 5-phospho-alpha-D-ribose 1-diphosphate: step 9/9. In terms of biological role, catalyzes the sequential NAD-dependent oxidations of L-histidinol to L-histidinaldehyde and then to L-histidine. This chain is Histidinol dehydrogenase, found in Desulfotalea psychrophila (strain LSv54 / DSM 12343).